The primary structure comprises 2323 residues: MKQRKGQGPGGGRGRKKRGLSDISPSTSLPPLVEGQLRCFLKLTINKVVWKIAKPPTSVLVRVRWWGETSDGTLFCPRDALQTEPKAVRTTTRYGIRCGPKQFTSYLTDMAVLVLEVITKFDHLPVGRVQISGLAQLSPTHQINGFFTIVSPASKKLGELQVSLALEPLSETYDSYKPLPATEVTKNVLLSERELRENTESSNTQSMIPSRSCRGPAIKIDGKELAGHSSRSTTPRGKDHLYFAENSDAVKGSLCGLQQHLNQGTNVETITLRGKAPQKQLSLLNSSEFQPQISTVAKSHSDSCILSSNTPPAKDLLSALLEQGNKLRNAMLISAMNSNPDTSMLLDKVPPPMTEAIPRSSALNSSENHFKGHSADHLLPLADTGAIQLLLGSAELSQGHFWNGLGSPPDSPTPGSDEYCSSDLNDPQYDQSLLENLFYTVPKSDVGTSELPSEDDGVEPSRTMNQSKASGRSKVVESKEQKQKRAAVKKSRNPIDQQELSRTPGHTPAMSLSVDRLALLGRVHSVRIIVETMGVPPDSPHMTPSRKNFAGKPPKPTAAKKRTFFVEYHFPVGFSKSGLGKTALITEVVRLASSKITDGVVKFQQRFVCPVEFGGPMIEHWWDSNLIFQIYAKKTPQKKPEVIGSASLPLRAVIQSELLSFSSQLPVQQENGLSSLGPLKVTMELVLGHKDFTGISAKLSSSTQPAPVSAATSSDTILPETGQDTACTRNPQSSNKIHEETTKKTQNLVLPDQESANSVASNSSIFMAVPSCNLVHQINGSNKESGLLLHVLLMVPDGKDFVFGEREKQPSCNVYLNCKLFSTEEVTRSVVSWGTAQPVFNFSQVIPVSLTSKCLERLKNNVMIIETWNKVRSPGQDKLLGLVKLPLHQFYMSFKDPKISRLLLDARYPVVAVDSYMPVIDVFSGHQNGSLRVFLAMGSSAQIMMLQRLKNEEGTLPPFSPRPAHFLDQPPVASVAMPEKQGTRLMEHHFEFCVAMVKGLMPLQATVWGEADCYVQYYFPFQDSQPSVLQGPDFLENGITLKPFRTSTTLCVPDPVFNSEHHHSLLLPTDVPVQRLLLSAFSSQGLVPGGGVQFEVWCRYYYPNVRDQMVAKGTLPLSRVCAMVTMQYREDVGMQSFNLPLTSRLEHSKELKNQSSGFLDVGLRYRRSPRTAEGILAARAVSISVHIIRACGLQAAAKALAEQEPALQFSATVGVNASVTAHLSFLPKGEQRQTRPVACSFCPEFSHHIEFPCNLVTQHCSGEACFLAELLEFAEIIFAIYHENTKSVSDITSIQSCKDYLLGIVKVPTKDLLVKRSGITGWYPVILPEDKGLPQDLDLMQKIVGGLELSVSFAHPGDRERVLEAAELLGWSFESIPKDLVKKEEEVPATVTISTPRLWLPIHCVLLAGHMNIHKNTYCYLRYKLYNQEAFWTPLRKPKESTNKNQVLITFKASKRAEVTRSQSLLWYFREEKLEIQVWRAYGNDNLERPHQTDSWIGSAYVDLSRLGEKSPRTLTISGVYPLFGRNASDLSGAALRIHVLLSPLSPHTEPARELDSMDCSSHSESEQHPRKSDALQLSPPHVLQTSPTSTQVHGNSAAAQVCPAQEGPPELAGTFAVSILVERAMHLSLKGSPLTDRKVSVPSCCVSFATATELSPVYTHVVENTDSPIWGFHQQARLSKELLLDPHQTLVFKVWHKGDEERVVGFASVDLSPLLSGFQFICGWYNITDFSGECQGQIKVAISPMESLMHLKEERQARRGIDTPGALIPLFSALSFPASAGCDAFPRPIARHVEGQLAHTSPKEDGLSSPARNGAIRSQAARHEEHVQNIRRFHESLQHGEAVLTSDEKLTTAPSSSHTSILTSLRKNLSELDEIQKYFSQKLSKPFLPFSSQSSPAVSQSQESQRDPVAAGTGRQDPENQCILEKSNHLVSQVSSLISDLQTLTRGSQAALTSQQARSRSRAVTTIPDAQGTEAAGEGSTTLEEPLAGAIEASTDSLPPPVEEPSKGGGMLHESLEQTMPITRVQSIDDTEVGPDYSDEDYEEDIIEPRTLNEITTVTDRTSPWSSFMSDMSEVLSPQPTEVQREGPSCPPEPFPREELKVKSSPQKAVSPQPAQGSPSQSGVCEGGAYKIEVEDLASAKPQPVPSLTFSEAQEGSDSVGWRASQINQVRKPMPEMLAESEAFSSEFSDSSESFETFPLHLPSQSKREDYKDSPAVRQKQVPTGSEVSTRQTLLLPEPVVVPNFFLPPQQLEASLRMISHSPGLPPAATTDQDKSEATRGALAQRPCRPRPYSIPPNLPEEETRRIARIFSSQYSKKTEET.

Disordered stretches follow at residues 1–27 (MKQR…SPST), 193–215 (RELR…SCRG), 402–426 (WNGL…DLND), 444–509 (SDVG…HTPA), 537–556 (PDSP…PPKP), and 698–745 (KLSS…TKKT). Over residues 200–209 (ESSNTQSMIP) the composition is skewed to polar residues. Serine 453 carries the post-translational modification Phosphoserine. Basic and acidic residues predominate over residues 474 to 483 (KVVESKEQKQ). Positions 504–663 (PGHTPAMSLS…IQSELLSFSS (160 aa)) constitute a C2 1 domain. A compositionally biased stretch (polar residues) spans 698 to 735 (KLSSSTQPAPVSAATSSDTILPETGQDTACTRNPQSSN). Phosphoserine is present on serine 713. 4 C2 domains span residues 771–903 (SCNL…SRLL), 969–1131 (QPPV…YRED), 1155–1323 (SSGF…TGWY), and 1383–1517 (KEEE…TLTI). Residues 1550–1574 (EPARELDSMDCSSHSESEQHPRKSD) are compositionally biased toward basic and acidic residues. Disordered stretches follow at residues 1550 to 1599 (EPAR…NSAA) and 1798 to 1824 (LAHT…AARH). Residues 1584-1599 (LQTSPTSTQVHGNSAA) are compositionally biased toward polar residues. The region spanning 1598-1726 (AAAQVCPAQE…SGFQFICGWY (129 aa)) is the C2 6 domain. Position 1871 is a phosphoserine (serine 1871). Disordered stretches follow at residues 1891 to 1918 (FSSQ…GRQD), 1952 to 2013 (ALTS…GGML), 2074 to 2163 (SEVL…SVGW), 2182 to 2231 (SEAF…EVST), and 2261 to 2323 (SHSP…TEET). The segment covering 1892-1904 (SSQSSPAVSQSQE) has biased composition (low complexity). Polar residues-rich tracts occupy residues 1952 to 1965 (ALTS…SRAV) and 2074 to 2083 (SEVLSPQPTE). The span at 2110–2125 (AVSPQPAQGSPSQSGV) shows a compositional bias: low complexity. The span at 2147-2158 (PSLTFSEAQEGS) shows a compositional bias: polar residues. The segment covering 2182 to 2197 (SEAFSSEFSDSSESFE) has biased composition (low complexity). Positions 2207–2216 (SKREDYKDSP) are enriched in basic and acidic residues. Residues 2222–2231 (QVPTGSEVST) show a composition bias toward polar residues.

Interacts with OFD1; OFD1 may act as a negative regulator of C2CD3. Associates with the BBSome complex. Interacts with IFT88, BBS4 and PCM1.

The protein localises to the cytoplasm. Its subcellular location is the cytoskeleton. It localises to the cilium basal body. The protein resides in the microtubule organizing center. It is found in the centrosome. The protein localises to the centriole. Functionally, component of the centrioles that acts as a positive regulator of centriole elongation. Promotes assembly of centriolar distal appendage, a structure at the distal end of the mother centriole that acts as an anchor of the cilium, and is required for recruitment of centriolar distal appendages proteins CEP83, SCLT1, CEP89, FBF1 and CEP164. Not required for centriolar satellite integrity or RAB8 activation. Required for primary cilium formation. Required for sonic hedgehog/SHH signaling and for proteolytic processing of GLI3. This chain is C2 domain-containing protein 3 (C2cd3), found in Mus musculus (Mouse).